The following is a 91-amino-acid chain: Small ribosomal subunit protein uS19 (91 aa).

It belongs to the universal ribosomal protein uS19 family.

Protein S19 forms a complex with S13 that binds strongly to the 16S ribosomal RNA. The sequence is that of Small ribosomal subunit protein uS19 from Azoarcus sp. (strain BH72).